Consider the following 160-residue polypeptide: Nucleotide-binding protein CBU_0114 (160 aa).

This sequence belongs to the YajQ family.

Its function is as follows. Nucleotide-binding protein. This is Nucleotide-binding protein CBU_0114 from Coxiella burnetii (strain RSA 493 / Nine Mile phase I).